The primary structure comprises 400 residues: Serine/threonine transporter SstT (400 aa).

9 helical membrane passes run 9-29, 36-56, 75-95, 134-154, 175-195, 209-229, 281-301, 323-343, and 349-369; these read LVTQ…VWPA, ILGS…VFVL, VLVL…VASM, ALLE…GLAL, VIQL…ASTF, LLAV…PLIV, IAIP…ISVL, VVAS…LLLI, and LFGI…IIGI.

The protein belongs to the dicarboxylate/amino acid:cation symporter (DAACS) (TC 2.A.23) family.

It is found in the cell inner membrane. It catalyses the reaction L-serine(in) + Na(+)(in) = L-serine(out) + Na(+)(out). The enzyme catalyses L-threonine(in) + Na(+)(in) = L-threonine(out) + Na(+)(out). In terms of biological role, involved in the import of serine and threonine into the cell, with the concomitant import of sodium (symport system). The sequence is that of Serine/threonine transporter SstT from Acidovorax sp. (strain JS42).